An 873-amino-acid chain; its full sequence is DNA mismatch repair protein MutS (873 aa).

625-632 (GPNMGGKS) contacts ATP.

The protein belongs to the DNA mismatch repair MutS family.

Its function is as follows. This protein is involved in the repair of mismatches in DNA. It is possible that it carries out the mismatch recognition step. This protein has a weak ATPase activity. This chain is DNA mismatch repair protein MutS, found in Xanthomonas oryzae pv. oryzae (strain KACC10331 / KXO85).